The following is a 1090-amino-acid chain: DNA damage-binding protein 1 (1090 aa).

The protein belongs to the DDB1 family. In terms of assembly, component of the UV-DDB complex, which is composed of DDB1 and DDB2. As to expression, expressed in proliferating tissues. Highly expressed in shoot apical meristem (SAM). Expressed in roots, young leaves, flag leaves, and panicles. Not detected in mature leaves.

It is found in the nucleus. Functionally, required for DNA repair. Binds to DDB2 to form the UV-damaged DNA-binding protein complex (the UV-DDB complex). The UV-DDB complex may recognize UV-induced DNA damage and recruit proteins of the nucleotide excision repair pathway (the NER pathway) to initiate DNA repair. May function as the substrate recognition module for a DCX (DDB1-CUL4-X-box) E3 ubiquitin-protein ligase complex. In Oryza sativa subsp. japonica (Rice), this protein is DNA damage-binding protein 1.